The sequence spans 513 residues: Homeobox and leucine zipper protein Homez (513 aa).

A DNA-binding region (homeobox 1) is located at residues 31 to 90 (WTQAVQTSELDGNEHLLQAFSYFPYPSLADIALLCLRHGLQMEKVKTWFMAQRLRCGISW). Residues lysine 156, lysine 174, and lysine 176 each participate in a glycyl lysine isopeptide (Lys-Gly) (interchain with G-Cter in SUMO2) cross-link. Disordered regions lie at residues 200–221 (LSKEQAGGGPDQSCGGGTASWN), 241–287 (SCKE…SFSP), 303–328 (RLRNNSVPSRVGPTEYLSPDMQHQRK), 402–429 (PAISTSSTRSLKEWAKTPPLPAPPPPPD), and 480–513 (LDEEEEEEDEELPEDGEEEEEEEEEEDDDVIIRD). Residues 205–217 (AGGGPDQSCGGGT) are compositionally biased toward gly residues. A compositionally biased stretch (low complexity) spans 248-260 (PSGTPPSSSASSP). The residue at position 320 (serine 320) is a Phosphoserine. 2 DNA-binding regions (homeobox) span residues 324–384 (QHQR…KHGQ) and 418–477 (TPPL…AEVV). The Nuclear localization signal motif lies at 327-332 (RKTKRK). Position 418 is a phosphothreonine (threonine 418). Residues 419–429 (PPLPAPPPPPD) are compositionally biased toward pro residues.

As to quaternary structure, homodimer or heterodimer (Potential). Interacts with HOXC8.

The protein localises to the nucleus. In terms of biological role, may function as a transcriptional regulator. The polypeptide is Homeobox and leucine zipper protein Homez (Homez) (Rattus norvegicus (Rat)).